The following is an 800-amino-acid chain: Protein SPT2 homolog (800 aa).

An important for interaction with DNA region spans residues 1 to 687; sequence MDFHSVLRMA…PGHRPNMQPP (687 aa). The stretch at 53–82 forms a coiled coil; the sequence is QEIQNKEVEAKRKKEGLLAKRKELKHDRKA. Disordered regions lie at residues 70-173, 197-646, and 661-698; these read LAKR…PALN, KEER…MAKP, and VPKS…TSSY. Positions 124–137 are enriched in acidic residues; it reads TEEDEEYMTEEELY. A compositionally biased stretch (low complexity) spans 155 to 164; that stretch reads PQKVAKAAPG. The stretch at 196–224 forms a coiled coil; sequence KKEERLRTAEELKELEFLERKAQKADRKD. Composition is skewed to basic and acidic residues over residues 197-226 and 249-259; these read KEER…KDPM and HSVEKRSHENS. Positions 260-272 are enriched in polar residues; sequence KSSSTEQNGTFRK. Over residues 273–295 the composition is skewed to basic and acidic residues; that stretch reads SSSDNRSREEKSGSVFHTKDSKF. 5 stretches are compositionally biased toward low complexity: residues 328–360, 367–377, 390–424, 443–501, and 514–581; these read SGST…SSGK, SSSARSSSGSG, GASG…SVGA, GVSG…SVSG, and GAPG…ASSS. Positions 608 to 626 are enriched in polar residues; the sequence is NSVRHNTTSISVSARSSLG. A compositionally biased stretch (pro residues) spans 684–693; that stretch reads MQPPGRPLPP. Residues 688–800 form an important for interaction with histones region; sequence GRPLPPITSS…LKSAKKMKSR (113 aa). Residues 756–800 adopt a coiled-coil conformation; it reads REQQKEEARSLRLGIQEDLEELRREEEELKQKAKQLKSAKKMKSR.

It belongs to the SPT2 family. In terms of assembly, interacts with histones. Interacts with a heterotetrameric complex formed by histone H3 and H4, especially when the histone tetramer is not bound to DNA.

The protein resides in the nucleus. Its subcellular location is the nucleolus. In terms of biological role, histone chaperone that stabilizes pre-existing histone tetramers and regulates replication-independent histone exchange on chromatin. Required for normal chromatin refolding in the coding region of transcribed genes, and for the suppression of spurious transcription. Binds DNA and histones and promotes nucleosome assembly (in vitro). Facilitates formation of tetrameric histone complexes containing histone H3 and H4. Modulates RNA polymerase 1-mediated transcription. Binds DNA, with a preference for branched DNA species, such as Y-form DNA and Holliday junction DNA. This is Protein SPT2 homolog (spty2d1) from Xenopus laevis (African clawed frog).